The following is a 313-amino-acid chain: Ribosomal RNA small subunit methyltransferase H (313 aa).

S-adenosyl-L-methionine-binding positions include 35 to 37 (GGH), Asp-55, Phe-81, Asp-103, and Gln-110.

Belongs to the methyltransferase superfamily. RsmH family.

The protein localises to the cytoplasm. The catalysed reaction is cytidine(1402) in 16S rRNA + S-adenosyl-L-methionine = N(4)-methylcytidine(1402) in 16S rRNA + S-adenosyl-L-homocysteine + H(+). Specifically methylates the N4 position of cytidine in position 1402 (C1402) of 16S rRNA. The protein is Ribosomal RNA small subunit methyltransferase H of Pseudomonas aeruginosa (strain LESB58).